We begin with the raw amino-acid sequence, 345 residues long: Phosphoribosylformylglycinamidine cyclo-ligase (345 aa).

The protein belongs to the AIR synthase family.

It localises to the cytoplasm. It catalyses the reaction 2-formamido-N(1)-(5-O-phospho-beta-D-ribosyl)acetamidine + ATP = 5-amino-1-(5-phospho-beta-D-ribosyl)imidazole + ADP + phosphate + H(+). Its pathway is purine metabolism; IMP biosynthesis via de novo pathway; 5-amino-1-(5-phospho-D-ribosyl)imidazole from N(2)-formyl-N(1)-(5-phospho-D-ribosyl)glycinamide: step 2/2. This chain is Phosphoribosylformylglycinamidine cyclo-ligase, found in Methanopyrus kandleri (strain AV19 / DSM 6324 / JCM 9639 / NBRC 100938).